The following is a 305-amino-acid chain: Methionyl-tRNA formyltransferase (305 aa).

A (6S)-5,6,7,8-tetrahydrofolate-binding site is contributed by Ser-111–Pro-114.

Belongs to the Fmt family.

The enzyme catalyses L-methionyl-tRNA(fMet) + (6R)-10-formyltetrahydrofolate = N-formyl-L-methionyl-tRNA(fMet) + (6S)-5,6,7,8-tetrahydrofolate + H(+). Functionally, attaches a formyl group to the free amino group of methionyl-tRNA(fMet). The formyl group appears to play a dual role in the initiator identity of N-formylmethionyl-tRNA by promoting its recognition by IF2 and preventing the misappropriation of this tRNA by the elongation apparatus. The polypeptide is Methionyl-tRNA formyltransferase (Helicobacter pylori (strain J99 / ATCC 700824) (Campylobacter pylori J99)).